A 130-amino-acid polypeptide reads, in one-letter code: Small ribosomal subunit protein uS9 (130 aa).

The interval threonine 105–arginine 130 is disordered. Residues arginine 106–lysine 115 show a composition bias toward basic and acidic residues. A compositionally biased stretch (basic residues) spans proline 116–arginine 130.

The protein belongs to the universal ribosomal protein uS9 family.

This is Small ribosomal subunit protein uS9 from Oenococcus oeni (strain ATCC BAA-331 / PSU-1).